A 370-amino-acid polypeptide reads, in one-letter code: Glutamate 5-kinase (370 aa).

Lysine 17 serves as a coordination point for ATP. 3 residues coordinate substrate: serine 57, aspartate 144, and asparagine 156. ATP is bound by residues 176-177 (SD) and 220-226 (TGGMVSK). In terms of domain architecture, PUA spans 282–360 (SGTLTLDDGA…SDLPAEMRRP (79 aa)).

Belongs to the glutamate 5-kinase family.

It is found in the cytoplasm. It catalyses the reaction L-glutamate + ATP = L-glutamyl 5-phosphate + ADP. Its pathway is amino-acid biosynthesis; L-proline biosynthesis; L-glutamate 5-semialdehyde from L-glutamate: step 1/2. Functionally, catalyzes the transfer of a phosphate group to glutamate to form L-glutamate 5-phosphate. The chain is Glutamate 5-kinase from Mycolicibacterium gilvum (strain PYR-GCK) (Mycobacterium gilvum (strain PYR-GCK)).